The sequence spans 329 residues: UPF0725 protein EMB2204 (329 aa).

The protein belongs to the UPF0725 (EMB2204) family.

In terms of biological role, may be involved in embryogenesis. The protein is UPF0725 protein EMB2204 (EMB2204) of Arabidopsis thaliana (Mouse-ear cress).